Consider the following 273-residue polypeptide: Tryptophan synthase alpha chain (273 aa).

Catalysis depends on proton acceptor residues glutamate 49 and aspartate 60.

It belongs to the TrpA family. As to quaternary structure, tetramer of two alpha and two beta chains.

The enzyme catalyses (1S,2R)-1-C-(indol-3-yl)glycerol 3-phosphate + L-serine = D-glyceraldehyde 3-phosphate + L-tryptophan + H2O. The protein operates within amino-acid biosynthesis; L-tryptophan biosynthesis; L-tryptophan from chorismate: step 5/5. The alpha subunit is responsible for the aldol cleavage of indoleglycerol phosphate to indole and glyceraldehyde 3-phosphate. The polypeptide is Tryptophan synthase alpha chain (Halorhodospira halophila (strain DSM 244 / SL1) (Ectothiorhodospira halophila (strain DSM 244 / SL1))).